The chain runs to 146 residues: Aspartate carbamoyltransferase regulatory chain (146 aa).

4 residues coordinate Zn(2+): C102, C107, C131, and C134.

It belongs to the PyrI family. As to quaternary structure, contains catalytic and regulatory chains. The cofactor is Zn(2+).

Involved in allosteric regulation of aspartate carbamoyltransferase. In Clostridium acetobutylicum (strain ATCC 824 / DSM 792 / JCM 1419 / IAM 19013 / LMG 5710 / NBRC 13948 / NRRL B-527 / VKM B-1787 / 2291 / W), this protein is Aspartate carbamoyltransferase regulatory chain.